Here is a 173-residue protein sequence, read N- to C-terminus: Ribosome maturation factor RimM (173 aa).

Positions 94-166 (VQEEPYIDII…KIIVELPMGF (73 aa)) constitute a PRC barrel domain.

This sequence belongs to the RimM family. As to quaternary structure, binds ribosomal protein uS19.

The protein resides in the cytoplasm. In terms of biological role, an accessory protein needed during the final step in the assembly of 30S ribosomal subunit, possibly for assembly of the head region. Essential for efficient processing of 16S rRNA. May be needed both before and after RbfA during the maturation of 16S rRNA. It has affinity for free ribosomal 30S subunits but not for 70S ribosomes. This Amoebophilus asiaticus (strain 5a2) protein is Ribosome maturation factor RimM.